A 491-amino-acid polypeptide reads, in one-letter code: Chromosomal replication initiator protein DnaA (491 aa).

A domain I, interacts with DnaA modulators region spans residues 1–69; it reads MTTWDKCLKK…TIQECHGNDL (69 aa). Residues 69-154 form a domain II region; that stretch reads LIIEYSNKKF…KEDEEYSFGL (86 aa). The domain III, AAA+ region stretch occupies residues 155 to 371; the sequence is PLKEKYVFDS…GALNRVLTTS (217 aa). Residues Gly199, Gly201, Lys202, and Thr203 each coordinate ATP. The tract at residues 372–491 is domain IV, binds dsDNA; the sequence is KFNHKDPTIE…YELLLDKISR (120 aa).

The protein belongs to the DnaA family. As to quaternary structure, oligomerizes as a right-handed, spiral filament on DNA at oriC.

The protein localises to the cytoplasm. Its function is as follows. Plays an essential role in the initiation and regulation of chromosomal replication. ATP-DnaA binds to the origin of replication (oriC) to initiate formation of the DNA replication initiation complex once per cell cycle. Binds the DnaA box (a 9 base pair repeat at the origin) and separates the double-stranded (ds)DNA. Forms a right-handed helical filament on oriC DNA; dsDNA binds to the exterior of the filament while single-stranded (ss)DNA is stabiized in the filament's interior. The ATP-DnaA-oriC complex binds and stabilizes one strand of the AT-rich DNA unwinding element (DUE), permitting loading of DNA polymerase. After initiation quickly degrades to an ADP-DnaA complex that is not apt for DNA replication. Binds acidic phospholipids. This Francisella tularensis subsp. holarctica (strain LVS) protein is Chromosomal replication initiator protein DnaA.